The following is a 159-amino-acid chain: Large ribosomal subunit protein uL13 (159 aa).

Belongs to the universal ribosomal protein uL13 family. Part of the 50S ribosomal subunit.

Functionally, this protein is one of the early assembly proteins of the 50S ribosomal subunit, although it is not seen to bind rRNA by itself. It is important during the early stages of 50S assembly. This is Large ribosomal subunit protein uL13 from Methanopyrus kandleri (strain AV19 / DSM 6324 / JCM 9639 / NBRC 100938).